The primary structure comprises 587 residues: L-ornithine N(5)-monooxygenase (587 aa).

FAD contacts are provided by residues 53-61 and Gln-72; that span reads EKHTSFQWH. Substrate is bound at residue Lys-77. Residue 235–238 participates in NADP(+) binding; sequence GGQS. Residues 282-285 and Asn-312 each bind substrate; that span reads NEVF. 312-314 is an NADP(+) binding site; the sequence is NYS. The disordered stretch occupies residues 488 to 511; the sequence is DNSAASGVSGASTPLTSPSEEEGK. Residues 491–505 are compositionally biased toward polar residues; sequence AASGVSGASTPLTSP. Residue 567–569 participates in FAD binding; sequence TLL. A substrate-binding site is contributed by Ser-570.

Belongs to the lysine N(6)-hydroxylase/L-ornithine N(5)-oxygenase family. As to quaternary structure, homotetramer. FAD is required as a cofactor.

It catalyses the reaction L-ornithine + NADPH + O2 = N(5)-hydroxy-L-ornithine + NADP(+) + H2O. The catalysed reaction is L-ornithine + NADH + O2 = N(5)-hydroxy-L-ornithine + NAD(+) + H2O. Its pathway is siderophore biosynthesis; ferrichrome biosynthesis. Functionally, L-ornithine N(5)-monooxygenase; part of the siderophore biosynthetic pathway. Omphalotus olearius produces ferrichrome A, but no other siderophore has been detected. Ferrichrome A consists of a hexapeptide ring made up of one glycine, two serine, and three N(5)-hydroxyornithine amino acid residues, the latter acylated by trans-(alpha-methyl)-glutaconic acid residues. The biosynthesis of ferrichrome A depends on the hydroxylation of ornithine to N(5)-hydroxyornithine, catalyzed by the monooxygenase omo1. The second step, the acylation of N(5)-hydroxy-L-ornithine is probably catalyzed by the N-acyltransferase ato1. Finally, assembly of ferrichrome A is catalyzed by the nonribosomal peptide synthase (NRPS) fso1. The polypeptide is L-ornithine N(5)-monooxygenase (Omphalotus olearius (Jack o'lantern)).